Consider the following 726-residue polypeptide: MARAAKSAVVLCMDVGLAMSHSNQGKESPFEQAKKVMMLFLQRQVFAESKDEIAVVLYGTDTTDNALAREDQYENISVHRHLMLPDFDLLEQIENVVEPGSVQADFLDALIVSMDLLQKETLGKKYTRLHIAVFSDLSSPFSVDQLEVIIANLKKAEITLQFFLPFSVDEEEFGGSSNNRGNAGSSDRGCGPGKGLSDQQKEGIEMVRKIMFSLDGEEGLSEVFTFRDSLERLSIFKKIERRPMPWPCQLTVGSSLSIRIVGYKSVTEEKVKKTWTHIDAKTHKKEDIKKETVYCLNNDEETEVEKDDTIQGFRYGSDIVPFSKVDQEQMKYKSEGKCFAVLGFTKSSMVLSNQFVGNQVIRMFAPSDDEAASVALSALIHALDEMDMVAIVRYVYDRRSNPQVGVAFPHIKDKYECLVYVQLPFMEDIRQYLFSSLKNNKKFTPTESQNSAIDSLIDSMSLIYDDGETKEDLFKTSKLPNPQFQRLFQCLQHKALNPESPLPPIDQHLLDMLETPVEVKEACMAPLATVKACFPLQEATKRKEVKTADEIFTKKTDEPDAKKLKEDDEGFSLLRLADGNVTSVGSVNPDQDFQALLRQKNTDFKHVSDQLIKRIYECLDVKQTQYYMKSILCIKTFREEAIKLSQVRLFNDFLQLLKQKVDGSALMEFWDIIVQEEISLITSSESKGSSVTPEEAKQFLAQKEEKVEEAAMMEDEGDVDDLLDMM.

The region spanning 8–160 (AVVLCMDVGL…ANLKKAEITL (153 aa)) is the VWFA domain. A leucine-zipper region spans residues 137–164 (LSSPFSVDQLEVIIANLKKAEITLQFFL). Residues 175 to 186 (GSSNNRGNAGSS) are compositionally biased toward low complexity. Residues 175–198 (GSSNNRGNAGSSDRGCGPGKGLSD) form a disordered region. The 197-residue stretch at 253–449 (GSSLSIRIVG…NKKFTPTESQ (197 aa)) folds into the Ku domain. The EEXXXDL motif motif lies at 714 to 722 (EDEGDVDDL).

This sequence belongs to the ku80 family. As to quaternary structure, heterodimer composed of xrcc5/Ku80 and xrcc6/Ku70. Post-translationally, ubiquitinated via 'Lys-48'-linked polyubiquitination at DNA double strand break sites (DSBs), leading to its release from DSBs and subsequent proteasomal degradation. Polyubiquitination is not required for completion of NHEJ. In terms of tissue distribution, expressed at high levels in oocyte and testis.

It is found in the nucleus. Functionally, single-stranded DNA-dependent ATP-dependent helicase that plays a key role in DNA non-homologous end joining (NHEJ). This chain is X-ray repair cross-complementing protein 5, found in Xenopus laevis (African clawed frog).